Reading from the N-terminus, the 329-residue chain is Quinone-oxidoreductase homolog, chloroplastic (329 aa).

The protein belongs to the zinc-containing alcohol dehydrogenase family. Quinone oxidoreductase subfamily. In terms of processing, the transit peptide is not cleaved.

Its subcellular location is the plastid. It is found in the chloroplast inner membrane. The sequence is that of Quinone-oxidoreductase homolog, chloroplastic (QOR) from Spinacia oleracea (Spinach).